Here is a 529-residue protein sequence, read N- to C-terminus: Tyrosinase (529 aa).

The first 18 residues, 1–18, serve as a signal peptide directing secretion; that stretch reads MLLAVLYCLLWSFQTSAG. Residues 19-476 lie on the Lumenal, melanosome side of the membrane; sequence HFPRACVSSK…YLEQASRIWS (458 aa). Residues Asn86, Asn111, and Asn161 are each glycosylated (N-linked (GlcNAc...) asparagine). Residues His180, His202, and His211 each contribute to the Cu cation site. Asn230 carries N-linked (GlcNAc...) asparagine glycosylation. Positions 287-313 are disordered; the sequence is SLCNGTPEGPLQRNPGNHDKSRTPRLP. The N-linked (GlcNAc...) asparagine glycan is linked to Asn337. Cu cation contacts are provided by His363 and His367. Residue Asn371 is glycosylated (N-linked (GlcNAc...) asparagine). His390 provides a ligand contact to Cu cation. Residues 477–497 form a helical membrane-spanning segment; the sequence is WLLGAAMVGAVLTALLAGLVS. The Cytoplasmic portion of the chain corresponds to 498 to 529; sequence LLCRHKRKQLPEEKQPLLMEKEDYHSLYQSHL.

The protein belongs to the tyrosinase family. Forms an OPN3-dependent complex with DCT in response to blue light in melanocytes. It depends on Cu(2+) as a cofactor. Glycosylated.

The protein resides in the melanosome membrane. The protein localises to the melanosome. The catalysed reaction is 2 L-dopa + O2 = 2 L-dopaquinone + 2 H2O. The enzyme catalyses L-tyrosine + O2 = L-dopaquinone + H2O. It carries out the reaction 2 5,6-dihydroxyindole-2-carboxylate + O2 = 2 indole-5,6-quinone-2-carboxylate + 2 H2O. In terms of biological role, this is a copper-containing oxidase that functions in the formation of pigments such as melanins and other polyphenolic compounds. Catalyzes the initial and rate limiting step in the cascade of reactions leading to melanin production from tyrosine. In addition to hydroxylating tyrosine to DOPA (3,4-dihydroxyphenylalanine), also catalyzes the oxidation of DOPA to DOPA-quinone, and possibly the oxidation of DHI (5,6-dihydroxyindole) to indole-5,6 quinone. This chain is Tyrosinase (TYR), found in Gorilla gorilla gorilla (Western lowland gorilla).